Reading from the N-terminus, the 594-residue chain is Glutamate decarboxylase 1 (594 aa).

Positions 1 to 13 (MASSTPSSSATSS) are enriched in low complexity. Residues 1–23 (MASSTPSSSATSSNAGADPNTTN) form a disordered region. Serine 78 is subject to Phosphoserine. 4-aminobutanoate is bound at residue 190–192 (QLS). At lysine 405 the chain carries N6-(pyridoxal phosphate)lysine. Position 567 (arginine 567) interacts with 4-aminobutanoate.

This sequence belongs to the group II decarboxylase family. As to quaternary structure, homodimer. Requires pyridoxal 5'-phosphate as cofactor.

The enzyme catalyses L-glutamate + H(+) = 4-aminobutanoate + CO2. Its function is as follows. Catalyzes the synthesis of the inhibitory neurotransmitter gamma-aminobutyric acid (GABA) with pyridoxal 5'-phosphate as cofactor. In Pan troglodytes (Chimpanzee), this protein is Glutamate decarboxylase 1 (GAD1).